A 327-amino-acid polypeptide reads, in one-letter code: Cytochrome P450 2C42 (327 aa).

A heme-binding site is contributed by C272.

The protein belongs to the cytochrome P450 family. Heme is required as a cofactor.

The protein resides in the endoplasmic reticulum membrane. The protein localises to the microsome membrane. The enzyme catalyses an organic molecule + reduced [NADPH--hemoprotein reductase] + O2 = an alcohol + oxidized [NADPH--hemoprotein reductase] + H2O + H(+). Functionally, cytochromes P450 are a group of heme-thiolate monooxygenases. In liver microsomes, this enzyme is involved in an NADPH-dependent electron transport pathway. It oxidizes a variety of structurally unrelated compounds, including steroids, fatty acids, and xenobiotics. The polypeptide is Cytochrome P450 2C42 (CYP2C42) (Sus scrofa (Pig)).